Consider the following 208-residue polypeptide: Thymidylate kinase (208 aa).

11–18 (GTEGVGKT) serves as a coordination point for ATP.

The protein belongs to the thymidylate kinase family.

It carries out the reaction dTMP + ATP = dTDP + ADP. Functionally, phosphorylation of dTMP to form dTDP in both de novo and salvage pathways of dTTP synthesis. This chain is Thymidylate kinase, found in Psychrobacter sp. (strain PRwf-1).